The following is a 675-amino-acid chain: Transmembrane protein 232 (675 aa).

A helical membrane pass occupies residues 163–183 (LVKIGYLIFLRLFVFFLHGHL). Residues 598-634 (WQKDMEARKREEEAYKAQNQKDKEEKEKIHFQEIMKQ) are a coiled coil. The tract at residues 605–624 (RKREEEAYKAQNQKDKEEKE) is disordered.

In terms of tissue distribution, high expression in the testis and weak expression levels in the spleen, liver, brain, uterus, lung, epididymis and kidney. Not detected in the heart or ovary.

Its subcellular location is the membrane. Plays a critical role for male fertility and sperm motility by regulating sperm cytoplasm removal and maintaining axoneme integrity. The sequence is that of Transmembrane protein 232 (Tmem232) from Mus musculus (Mouse).